Consider the following 156-residue polypeptide: uncharacterized protein (156 aa).

The stretch at 43-84 forms a coiled coil; it reads LKIDENEVKLEISVEKLKNLSRVCENIEQVVDKVVEELRYAL.

This is an uncharacterized protein from Aquifex aeolicus (strain VF5).